The following is a 229-amino-acid chain: Potassium/proton antiporter CemA (229 aa).

3 helical membrane passes run 6–26, 107–127, and 189–209; these read AFIPFFYFTSIVFLPWVISLC, ILHFSTNLISFVILSGYSFWG, and ILSGLVSTFPVILDTIFKYWI.

Belongs to the CemA family.

Its subcellular location is the plastid. The protein resides in the chloroplast inner membrane. The enzyme catalyses K(+)(in) + H(+)(out) = K(+)(out) + H(+)(in). Its function is as follows. Contributes to K(+)/H(+) antiport activity by supporting proton efflux to control proton extrusion and homeostasis in chloroplasts in a light-dependent manner to modulate photosynthesis. Prevents excessive induction of non-photochemical quenching (NPQ) under continuous-light conditions. Indirectly promotes efficient inorganic carbon uptake into chloroplasts. This Draba nemorosa (Woodland whitlowgrass) protein is Potassium/proton antiporter CemA.